The chain runs to 95 residues: Suppressor of silencing 2b (95 aa).

The homotetramerization stretch occupies residues 8-18 (LHEIIRKLERM). Residues 8 to 40 (LHEIIRKLERMNQKKQAQRKRHKLNRKERGHKS) are a coiled coil. Positions 16-49 (ERMNQKKQAQRKRHKLNRKERGHKSPSEQRRSEL) are disordered. Basic residues predominate over residues 23–37 (QAQRKRHKLNRKERG). Residues 26–30 (RKRHK) carry the Nuclear localization signal motif. A compositionally biased stretch (basic and acidic residues) spans 38 to 49 (HKSPSEQRRSEL).

This sequence belongs to the cucumovirus/ilarvirus protein 2b family. Homodimer. Homotetramer (dimer of dimers).

The protein localises to the host nucleus. In terms of biological role, acts as a suppressor of RNA-mediated gene silencing, also known as post-transcriptional gene silencing (PTGS), a mechanism of plant viral defense that limits the accumulation of viral RNAs. Forms a homodimer to measure siRNA duplex in a length-preference mode. Binds to both siRNA duplexes (19bp) and long siRNA duplexes (30bp). This is Suppressor of silencing 2b from Canna (Florist's daisy).